The sequence spans 230 residues: uncharacterized protein (230 aa).

It belongs to the transferase hexapeptide repeat family.

This is an uncharacterized protein from Escherichia coli O6:K15:H31 (strain 536 / UPEC).